The following is a 370-amino-acid chain: Chloromuconate cycloisomerase (370 aa).

The active-site Proton acceptor is the lysine 165. Positions 194, 220, and 245 each coordinate Mn(2+). Residue glutamate 323 is the Proton donor of the active site.

This sequence belongs to the mandelate racemase/muconate lactonizing enzyme family. It depends on Mn(2+) as a cofactor.

The catalysed reaction is 2-[(2R)-2-chloro-2,5-dihydro-5-oxofuryl]acetate = 3-chloro-cis,cis-muconate + H(+). The protein operates within aromatic compound metabolism; 3-chlorocatechol degradation. This Pseudomonas sp. (strain P51) protein is Chloromuconate cycloisomerase (tcbD).